A 723-amino-acid chain; its full sequence is Homeobox protein HAT3.1 (723 aa).

Over residues 1 to 10 (MYKAVSKRVT) the composition is skewed to basic residues. Disordered regions lie at residues 1–94 (MYKA…GSHR) and 135–173 (KRAQ…QVRE). Residues 11 to 23 (RSSGSGLKQTNVD) are compositionally biased toward polar residues. Positions 58-83 (LHHEIMDHGKGNEEQKPTPQTVKKDS) are enriched in basic and acidic residues. A PHD-type zinc finger spans residues 265–322 (DIFCAKCGSKDLSVDNDIILCDGFCDRGFHQYCLEPPLRKEDIPPDDEGWLCPGCDCK). Disordered stretches follow at residues 357 to 628 (GGQN…KTQR) and 680 to 723 (VEKL…RRRK). Residues 365–407 (LPSDDSDDEEYDPDCLNDNENDEDGSDDNEESENEDGSSDETE) are compositionally biased toward acidic residues. The span at 417 to 427 (ESFKEGKDIMK) shows a compositional bias: basic and acidic residues. Acidic residues predominate over residues 435–453 (DDSEDDDYDPDAPTCDDDK). Basic and acidic residues-rich tracts occupy residues 518 to 530 (RNVE…KLYD) and 547 to 556 (DKTARMGKED). A compositionally biased stretch (basic residues) spans 580–589 (KKLIRKSKRA). The homeobox DNA-binding region spans 614–673 (SSSSACKQTDPKTQRLYISFQENQYPDKATKESLAKELQMTVKQVNNWFKHRRWSINSKP). The segment covering 680–690 (VEKLKTGKEGE) has biased composition (basic and acidic residues). Over residues 695-705 (VAGSSKQTMET) the composition is skewed to polar residues.

This sequence belongs to the PHD-associated homeobox family. As to expression, primarily detected in root tissue.

The protein resides in the nucleus. Functionally, binds only to large DNA fragments. Recognizes a DNA fragment carrying 8 copies of box7 motif of the light-induced cab-E promoter of Nicotiana plumbaginifolia. Also recognizes the box7m1 motif. The protein is Homeobox protein HAT3.1 (HAT3.1) of Arabidopsis thaliana (Mouse-ear cress).